An 89-amino-acid polypeptide reads, in one-letter code: Small ribosomal subunit protein uS15 (89 aa).

It belongs to the universal ribosomal protein uS15 family. As to quaternary structure, part of the 30S ribosomal subunit. Forms a bridge to the 50S subunit in the 70S ribosome, contacting the 23S rRNA.

Its function is as follows. One of the primary rRNA binding proteins, it binds directly to 16S rRNA where it helps nucleate assembly of the platform of the 30S subunit by binding and bridging several RNA helices of the 16S rRNA. In terms of biological role, forms an intersubunit bridge (bridge B4) with the 23S rRNA of the 50S subunit in the ribosome. The chain is Small ribosomal subunit protein uS15 from Ureaplasma parvum serovar 3 (strain ATCC 27815 / 27 / NCTC 11736).